Reading from the N-terminus, the 130-residue chain is Albumin-1 A (130 aa).

The N-terminal stretch at 1 to 26 is a signal peptide; that stretch reads MASVKLASLIVLFATLGMFLTKNVGA. 3 cysteine pairs are disulfide-bonded: cysteine 29–cysteine 46, cysteine 33–cysteine 48, and cysteine 41–cysteine 58. 2 consecutive propeptides follow at residues 64–69 and 123–130; these read VFLRTN and LLKSVSTA.

Post-translationally, the C-terminal glycine may be removed from PA1b. Major component of both the cotyledons and embryonic axes of mature seeds.

Its function is as follows. PA1b binds to basic 7S globulin (BG) and stimulates its phosphorylation activity. Involved in the signal transduction system to regulate the growth and differentiation as a hormone peptide. Toxic to various insects through binding to a high affinity binding site in the insect gut. The sequence is that of Albumin-1 A from Pisum sativum (Garden pea).